The chain runs to 204 residues: Ribonuclease HII (204 aa).

Residues 17–204 (QLVAGVDEVG…KPVQQLLQGD (188 aa)) enclose the RNase H type-2 domain. Positions 23, 24, and 115 each coordinate a divalent metal cation.

It belongs to the RNase HII family. The cofactor is Mn(2+). Mg(2+) serves as cofactor.

Its subcellular location is the cytoplasm. The catalysed reaction is Endonucleolytic cleavage to 5'-phosphomonoester.. In terms of biological role, endonuclease that specifically degrades the RNA of RNA-DNA hybrids. The sequence is that of Ribonuclease HII from Hahella chejuensis (strain KCTC 2396).